A 712-amino-acid chain; its full sequence is Effector protein HopM1 (712 aa).

Positions 22-58 (DTVPAQTAHPNAVTAGMNPPLTPDQSGSHATESSSAG) are disordered. The span at 44–57 (PDQSGSHATESSSA) shows a compositional bias: polar residues.

As to quaternary structure, interacts with the chaperone ShcM. Interacts with host plant BIG5/ATMIN7.

The protein localises to the secreted. It is found in the host membrane. In terms of biological role, involved in the suppression of basal resistance and promotion of disease symptoms in plants. Mediates the ubiquitination and degradation, via the host proteasome, of a low-abundance immunity-associated protein in Arabidopsis thaliana. May be involved in the inhibition of a host vesicle trafficking pathway. The polypeptide is Effector protein HopM1 (hopM1) (Pseudomonas syringae pv. tomato (strain ATCC BAA-871 / DC3000)).